The chain runs to 372 residues: DNA replication and repair protein RecF (372 aa).

30–37 provides a ligand contact to ATP; that stretch reads GANGQGKT.

The protein belongs to the RecF family.

The protein resides in the cytoplasm. Its function is as follows. The RecF protein is involved in DNA metabolism; it is required for DNA replication and normal SOS inducibility. RecF binds preferentially to single-stranded, linear DNA. It also seems to bind ATP. This Heliobacterium modesticaldum (strain ATCC 51547 / Ice1) protein is DNA replication and repair protein RecF.